A 183-amino-acid polypeptide reads, in one-letter code: Crossover junction endodeoxyribonuclease RuvC (183 aa).

Residues D7, E66, and D138 contribute to the active site. Positions 7, 66, and 138 each coordinate Mg(2+).

It belongs to the RuvC family. As to quaternary structure, homodimer which binds Holliday junction (HJ) DNA. The HJ becomes 2-fold symmetrical on binding to RuvC with unstacked arms; it has a different conformation from HJ DNA in complex with RuvA. In the full resolvosome a probable DNA-RuvA(4)-RuvB(12)-RuvC(2) complex forms which resolves the HJ. Requires Mg(2+) as cofactor.

The protein localises to the cytoplasm. It carries out the reaction Endonucleolytic cleavage at a junction such as a reciprocal single-stranded crossover between two homologous DNA duplexes (Holliday junction).. In terms of biological role, the RuvA-RuvB-RuvC complex processes Holliday junction (HJ) DNA during genetic recombination and DNA repair. Endonuclease that resolves HJ intermediates. Cleaves cruciform DNA by making single-stranded nicks across the HJ at symmetrical positions within the homologous arms, yielding a 5'-phosphate and a 3'-hydroxyl group; requires a central core of homology in the junction. The consensus cleavage sequence is 5'-(A/T)TT(C/G)-3'. Cleavage occurs on the 3'-side of the TT dinucleotide at the point of strand exchange. HJ branch migration catalyzed by RuvA-RuvB allows RuvC to scan DNA until it finds its consensus sequence, where it cleaves and resolves the cruciform DNA. In Burkholderia ambifaria (strain ATCC BAA-244 / DSM 16087 / CCUG 44356 / LMG 19182 / AMMD) (Burkholderia cepacia (strain AMMD)), this protein is Crossover junction endodeoxyribonuclease RuvC.